A 549-amino-acid polypeptide reads, in one-letter code: Glucose-6-phosphate isomerase (549 aa).

3 positions are modified to N6-acetyllysine: K80, K228, and K234. Residue E355 is the Proton donor of the active site. Active-site residues include H386 and K514.

Belongs to the GPI family.

It localises to the cytoplasm. The enzyme catalyses alpha-D-glucose 6-phosphate = beta-D-fructose 6-phosphate. The protein operates within carbohydrate biosynthesis; gluconeogenesis. Its pathway is carbohydrate degradation; glycolysis; D-glyceraldehyde 3-phosphate and glycerone phosphate from D-glucose: step 2/4. In terms of biological role, catalyzes the reversible isomerization of glucose-6-phosphate to fructose-6-phosphate. The polypeptide is Glucose-6-phosphate isomerase (Escherichia coli O139:H28 (strain E24377A / ETEC)).